The chain runs to 571 residues: uncharacterized protein (571 aa).

Disordered regions lie at residues 71–128 (TNHY…RVTA), 142–258 (NKND…PQNE), and 298–336 (LNRQ…TTKR). The span at 88–113 (PNRSGVSSPVNDGASSPTQRGGTTPA) shows a compositional bias: polar residues. Over residues 168–184 (RGYPGPGPRGYPGPGPR) the composition is skewed to pro residues. The span at 205-215 (QGPRRYSCPGP) shows a compositional bias: low complexity. Over residues 217–234 (GYPGPGSSGRPDPGGGLQ) the composition is skewed to gly residues. The span at 311–326 (PEKQQTPPPEETQNAQ) shows a compositional bias: low complexity.

This is an uncharacterized protein from Drosophila melanogaster (Fruit fly).